Reading from the N-terminus, the 346-residue chain is Phenylalanine--tRNA ligase alpha subunit (346 aa).

E264 lines the Mg(2+) pocket.

This sequence belongs to the class-II aminoacyl-tRNA synthetase family. Phe-tRNA synthetase alpha subunit type 1 subfamily. Tetramer of two alpha and two beta subunits. Mg(2+) is required as a cofactor.

Its subcellular location is the cytoplasm. The catalysed reaction is tRNA(Phe) + L-phenylalanine + ATP = L-phenylalanyl-tRNA(Phe) + AMP + diphosphate + H(+). The chain is Phenylalanine--tRNA ligase alpha subunit from Leifsonia xyli subsp. xyli (strain CTCB07).